A 234-amino-acid chain; its full sequence is Orotidine 5'-phosphate decarboxylase (234 aa).

Substrate contacts are provided by residues Asp14, Lys36, 63 to 72, Thr123, Arg184, Gln193, Gly213, and Arg214; that span reads DLKFHDIPNT. Catalysis depends on Lys65, which acts as the Proton donor.

It belongs to the OMP decarboxylase family. Type 1 subfamily. Homodimer.

The enzyme catalyses orotidine 5'-phosphate + H(+) = UMP + CO2. Its pathway is pyrimidine metabolism; UMP biosynthesis via de novo pathway; UMP from orotate: step 2/2. Catalyzes the decarboxylation of orotidine 5'-monophosphate (OMP) to uridine 5'-monophosphate (UMP). The chain is Orotidine 5'-phosphate decarboxylase from Pseudoalteromonas translucida (strain TAC 125).